A 144-amino-acid polypeptide reads, in one-letter code: uncharacterized protein (144 aa).

The next 4 membrane-spanning stretches (helical) occupy residues 16 to 36 (FLIF…GAIF), 48 to 68 (GFIV…ALII), 87 to 107 (LLPE…LVLL), and 120 to 140 (VMSL…WYFG).

It is found in the cell membrane. This is an uncharacterized protein from Methanocaldococcus jannaschii (strain ATCC 43067 / DSM 2661 / JAL-1 / JCM 10045 / NBRC 100440) (Methanococcus jannaschii).